The chain runs to 259 residues: Type III pantothenate kinase (259 aa).

9-16 (DAGNSRIK) lines the ATP pocket. Substrate is bound by residues Tyr93 and 100–103 (GSDR). Asp102 serves as the catalytic Proton acceptor. Thr126 lines the ATP pocket. Thr190 is a substrate binding site.

This sequence belongs to the type III pantothenate kinase family. As to quaternary structure, homodimer. It depends on NH4(+) as a cofactor. K(+) is required as a cofactor.

The protein resides in the cytoplasm. The catalysed reaction is (R)-pantothenate + ATP = (R)-4'-phosphopantothenate + ADP + H(+). Its pathway is cofactor biosynthesis; coenzyme A biosynthesis; CoA from (R)-pantothenate: step 1/5. Its function is as follows. Catalyzes the phosphorylation of pantothenate (Pan), the first step in CoA biosynthesis. The sequence is that of Type III pantothenate kinase from Burkholderia pseudomallei (strain K96243).